Here is a 265-residue protein sequence, read N- to C-terminus: MEVLKRENPLIHMITNYVTVNDLAQVTINYGGLPLMATHHDELKVITKMANGLLVNIGTLEPYQMESSMISMKIAKEKGIPSVLDSVCVQVSKLRRDFAKKIILEGEPSLIKGNLAEIKTLIGETSNSIGIDSFEDSLSENTKNKIKEYAKERNLIVVVSGVVDFITNGEESASVKNGTYKMSKITGTGCMLGALLTLALSFYDHKDLRFKEVVKAVSTWGICGELAEERLREKEGLMTFKYNLLDELSIINDEIIKEREKVIYE.

Residue M36 participates in substrate binding. ATP contacts are provided by K112 and S160. G187 is a binding site for substrate.

It belongs to the Thz kinase family. Requires Mg(2+) as cofactor.

It carries out the reaction 5-(2-hydroxyethyl)-4-methylthiazole + ATP = 4-methyl-5-(2-phosphooxyethyl)-thiazole + ADP + H(+). It functions in the pathway cofactor biosynthesis; thiamine diphosphate biosynthesis; 4-methyl-5-(2-phosphoethyl)-thiazole from 5-(2-hydroxyethyl)-4-methylthiazole: step 1/1. Functionally, catalyzes the phosphorylation of the hydroxyl group of 4-methyl-5-beta-hydroxyethylthiazole (THZ). The protein is Hydroxyethylthiazole kinase of Clostridium perfringens (strain SM101 / Type A).